The sequence spans 447 residues: Probable glycine dehydrogenase (decarboxylating) subunit 1 (447 aa).

Belongs to the GcvP family. N-terminal subunit subfamily. As to quaternary structure, the glycine cleavage system is composed of four proteins: P, T, L and H. In this organism, the P 'protein' is a heterodimer of two subunits.

It carries out the reaction N(6)-[(R)-lipoyl]-L-lysyl-[glycine-cleavage complex H protein] + glycine + H(+) = N(6)-[(R)-S(8)-aminomethyldihydrolipoyl]-L-lysyl-[glycine-cleavage complex H protein] + CO2. In terms of biological role, the glycine cleavage system catalyzes the degradation of glycine. The P protein binds the alpha-amino group of glycine through its pyridoxal phosphate cofactor; CO(2) is released and the remaining methylamine moiety is then transferred to the lipoamide cofactor of the H protein. In Bacillus anthracis (strain A0248), this protein is Probable glycine dehydrogenase (decarboxylating) subunit 1.